The following is a 971-amino-acid chain: Lon protease homolog, mitochondrial (971 aa).

A mitochondrion-targeting transit peptide spans Met-1–Tyr-55. In terms of domain architecture, Lon N-terminal spans Val-89–Lys-359. Positions Thr-190 to Lys-255 are disordered. Residues Leu-214–Ala-224 are compositionally biased toward pro residues. Gly-512–Thr-519 contacts ATP. Positions Ala-718–Ser-749 are disordered. Residues Thr-733–Ser-749 are compositionally biased toward polar residues. Positions Val-784–Gln-971 constitute a Lon proteolytic domain. Catalysis depends on residues Ser-878 and Lys-921.

This sequence belongs to the peptidase S16 family. As to quaternary structure, homohexamer or homoheptamer. Organized in a ring with a central cavity.

It is found in the mitochondrion matrix. The catalysed reaction is Hydrolysis of proteins in presence of ATP.. In terms of biological role, ATP-dependent serine protease that mediates the selective degradation of misfolded, unassembled or oxidatively damaged polypeptides as well as certain short-lived regulatory proteins in the mitochondrial matrix. May also have a chaperone function in the assembly of inner membrane protein complexes. Participates in the regulation of mitochondrial gene expression and in the maintenance of the integrity of the mitochondrial genome. Binds to mitochondrial DNA in a site-specific manner. Involved in the degradation of transcription factor atfs-1 in the mitochondrion. This is Lon protease homolog, mitochondrial from Caenorhabditis elegans.